A 163-amino-acid chain; its full sequence is Cyanate hydratase (163 aa).

Catalysis depends on residues arginine 103, glutamate 106, and serine 129.

It belongs to the cyanase family.

It carries out the reaction cyanate + hydrogencarbonate + 3 H(+) = NH4(+) + 2 CO2. Its function is as follows. Catalyzes the reaction of cyanate with bicarbonate to produce ammonia and carbon dioxide. This Ajellomyces capsulatus (strain G186AR / H82 / ATCC MYA-2454 / RMSCC 2432) (Darling's disease fungus) protein is Cyanate hydratase.